Reading from the N-terminus, the 341-residue chain is Methionine import ATP-binding protein MetN 3 (341 aa).

The region spanning Ile-2–Val-241 is the ABC transporter domain. Gly-38 to Ser-45 lines the ATP pocket.

Belongs to the ABC transporter superfamily. Methionine importer (TC 3.A.1.24) family. As to quaternary structure, the complex is composed of two ATP-binding proteins (MetN), two transmembrane proteins (MetI) and a solute-binding protein (MetQ).

Its subcellular location is the cell membrane. The enzyme catalyses L-methionine(out) + ATP + H2O = L-methionine(in) + ADP + phosphate + H(+). It carries out the reaction D-methionine(out) + ATP + H2O = D-methionine(in) + ADP + phosphate + H(+). In terms of biological role, part of the ABC transporter complex MetNIQ involved in methionine import. Responsible for energy coupling to the transport system. This Bacillus cereus (strain ATCC 14579 / DSM 31 / CCUG 7414 / JCM 2152 / NBRC 15305 / NCIMB 9373 / NCTC 2599 / NRRL B-3711) protein is Methionine import ATP-binding protein MetN 3.